The chain runs to 248 residues: tRNA (guanine-N(1)-)-methyltransferase (248 aa).

Residues Gly116 and 136-141 each bind S-adenosyl-L-methionine; that span reads VGDYVL.

It belongs to the RNA methyltransferase TrmD family. Homodimer.

Its subcellular location is the cytoplasm. The catalysed reaction is guanosine(37) in tRNA + S-adenosyl-L-methionine = N(1)-methylguanosine(37) in tRNA + S-adenosyl-L-homocysteine + H(+). Functionally, specifically methylates guanosine-37 in various tRNAs. This Psychromonas ingrahamii (strain DSM 17664 / CCUG 51855 / 37) protein is tRNA (guanine-N(1)-)-methyltransferase.